The following is a 467-amino-acid chain: MSTGKVVQVIGPVVDVEFSLNDKLPDINNALIIQKDNDDTLTVEVSLELGDGVVRTVAMDGTDGLRRGMTVEDTGSSITVPVGKETLGRVFNVLGETIDGGPEFGPDAERNPIHRDAPKYDELTTSTEVLETGIKVIDLLAPYVRGGKIGLFGGAGVGKTVLIQELIHNIAQEHNGISVFTGVGERTREGNDLYFEMKASGVLKNTAMVYGQMNEPPGARMRVALTGLTIAEYFRDVQGQDVLLFIDNIFRFTQAGSEVSALLGRIPSAVGYQPTLATEMGQLQERITSTKKGSVTSIQAVYVPADDYTDPAPATTFAHLDATTNLERSLTEQGIYPAVDPLASSSIALDPSIVGEEHYQVATEVQRVLQRYRELQDIISILGMDELSDEEKTTVARARRIQFFLSQNFFVAENFTGQPGSYVPINDTIKGFKEILEGKYDDLPEDAFRQVGKIDDVVEKAKSMVTD.

153-160 (GGAGVGKT) lines the ATP pocket.

It belongs to the ATPase alpha/beta chains family. F-type ATPases have 2 components, CF(1) - the catalytic core - and CF(0) - the membrane proton channel. CF(1) has five subunits: alpha(3), beta(3), gamma(1), delta(1), epsilon(1). CF(0) has three main subunits: a(1), b(2) and c(9-12). The alpha and beta chains form an alternating ring which encloses part of the gamma chain. CF(1) is attached to CF(0) by a central stalk formed by the gamma and epsilon chains, while a peripheral stalk is formed by the delta and b chains.

It is found in the cell membrane. The enzyme catalyses ATP + H2O + 4 H(+)(in) = ADP + phosphate + 5 H(+)(out). Produces ATP from ADP in the presence of a proton gradient across the membrane. The catalytic sites are hosted primarily by the beta subunits. This is ATP synthase subunit beta from Lactiplantibacillus plantarum (strain ATCC BAA-793 / NCIMB 8826 / WCFS1) (Lactobacillus plantarum).